Consider the following 548-residue polypeptide: CTP synthase (548 aa).

The amidoligase domain stretch occupies residues 1 to 270; the sequence is MTKYVFVTGG…DNIVCEALGL (270 aa). S13 provides a ligand contact to CTP. Residue S13 participates in UTP binding. Residues 14–19 and D71 contribute to the ATP site; that span reads SLGKGI. Positions 71 and 144 each coordinate Mg(2+). Residues 151-153, 191-196, and K227 contribute to the CTP site; these read DIE and KTKPTQ. UTP-binding positions include 191–196 and K227; that span reads KTKPTQ. In terms of domain architecture, Glutamine amidotransferase type-1 spans 295–545; it reads TIGMVGKYVD…IEAAIANHAR (251 aa). G356 provides a ligand contact to L-glutamine. The active-site Nucleophile; for glutamine hydrolysis is C383. Residues 384-387, E407, and R473 each bind L-glutamine; that span reads LGMQ. Active-site residues include H518 and E520.

The protein belongs to the CTP synthase family. Homotetramer.

The enzyme catalyses UTP + L-glutamine + ATP + H2O = CTP + L-glutamate + ADP + phosphate + 2 H(+). It catalyses the reaction L-glutamine + H2O = L-glutamate + NH4(+). The catalysed reaction is UTP + NH4(+) + ATP = CTP + ADP + phosphate + 2 H(+). Its pathway is pyrimidine metabolism; CTP biosynthesis via de novo pathway; CTP from UDP: step 2/2. Allosterically activated by GTP, when glutamine is the substrate; GTP has no effect on the reaction when ammonia is the substrate. The allosteric effector GTP functions by stabilizing the protein conformation that binds the tetrahedral intermediate(s) formed during glutamine hydrolysis. Inhibited by the product CTP, via allosteric rather than competitive inhibition. Its function is as follows. Catalyzes the ATP-dependent amination of UTP to CTP with either L-glutamine or ammonia as the source of nitrogen. Regulates intracellular CTP levels through interactions with the four ribonucleotide triphosphates. The polypeptide is CTP synthase (Bordetella petrii (strain ATCC BAA-461 / DSM 12804 / CCUG 43448)).